The sequence spans 121 residues: Large ribosomal subunit protein bL12 (121 aa).

It belongs to the bacterial ribosomal protein bL12 family. Homodimer. Part of the ribosomal stalk of the 50S ribosomal subunit. Forms a multimeric L10(L12)X complex, where L10 forms an elongated spine to which 2 to 4 L12 dimers bind in a sequential fashion. Binds GTP-bound translation factors.

In terms of biological role, forms part of the ribosomal stalk which helps the ribosome interact with GTP-bound translation factors. Is thus essential for accurate translation. The protein is Large ribosomal subunit protein bL12 of Enterobacter sp. (strain 638).